A 367-amino-acid polypeptide reads, in one-letter code: UDP-N-acetylenolpyruvoylglucosamine reductase 2 (367 aa).

One can recognise an FAD-binding PCMH-type domain in the interval 31 to 198; sequence IGGKPRSAVR…LAIELQLLTD (168 aa). Arg-176 is a catalytic residue. Ser-256 functions as the Proton donor in the catalytic mechanism. Residue Glu-357 is part of the active site.

Belongs to the MurB family. The cofactor is FAD.

The protein localises to the cytoplasm. The catalysed reaction is UDP-N-acetyl-alpha-D-muramate + NADP(+) = UDP-N-acetyl-3-O-(1-carboxyvinyl)-alpha-D-glucosamine + NADPH + H(+). The protein operates within cell wall biogenesis; peptidoglycan biosynthesis. In terms of biological role, cell wall formation. This Corynebacterium glutamicum (strain ATCC 13032 / DSM 20300 / JCM 1318 / BCRC 11384 / CCUG 27702 / LMG 3730 / NBRC 12168 / NCIMB 10025 / NRRL B-2784 / 534) protein is UDP-N-acetylenolpyruvoylglucosamine reductase 2 (murB2).